Consider the following 436-residue polypeptide: Chromosomal replication initiator protein DnaA (436 aa).

The domain I, interacts with DnaA modulators stretch occupies residues 1-69 (MLADEVIELL…ANIFEVKTGI (69 aa)). Residues 69–99 (IKPVISITTQKNRVSIKAKDIDVKQIRTQSS) form a domain II region. The segment at 100 to 314 (LLNPSYTFES…SAIININAFA (215 aa)) is domain III, AAA+ region. 4 residues coordinate ATP: G144, G146, K147, and T148. Residues 315–436 (NIMRQEITLE…ELKNKITSKE (122 aa)) are domain IV, binds dsDNA.

It belongs to the DnaA family. As to quaternary structure, oligomerizes as a right-handed, spiral filament on DNA at oriC.

The protein resides in the cytoplasm. In terms of biological role, plays an essential role in the initiation and regulation of chromosomal replication. ATP-DnaA binds to the origin of replication (oriC) to initiate formation of the DNA replication initiation complex once per cell cycle. Binds the DnaA box (a 9 base pair repeat at the origin) and separates the double-stranded (ds)DNA. Forms a right-handed helical filament on oriC DNA; dsDNA binds to the exterior of the filament while single-stranded (ss)DNA is stabiized in the filament's interior. The ATP-DnaA-oriC complex binds and stabilizes one strand of the AT-rich DNA unwinding element (DUE), permitting loading of DNA polymerase. After initiation quickly degrades to an ADP-DnaA complex that is not apt for DNA replication. Binds acidic phospholipids. The sequence is that of Chromosomal replication initiator protein DnaA from Campylobacter fetus subsp. fetus (strain 82-40).